The primary structure comprises 893 residues: DNA mismatch repair protein MutS (893 aa).

An ATP-binding site is contributed by 638 to 645 (GPNMAGKS).

The protein belongs to the DNA mismatch repair MutS family.

Functionally, this protein is involved in the repair of mismatches in DNA. It is possible that it carries out the mismatch recognition step. This protein has a weak ATPase activity. The protein is DNA mismatch repair protein MutS of Lawsonia intracellularis (strain PHE/MN1-00).